We begin with the raw amino-acid sequence, 114 residues long: Transmembrane protein 14B (114 aa).

4 helical membrane passes run 8 to 28, 34 to 54, 60 to 80, and 83 to 103; these read LVPLHWFGFGYTALVVSGGIV, GSVPSLAAGLLFGSLAGLGAY, PRNVWGFLAATSVTFVGVMGM, and YYYGKFMPVGLIAGASLLMAA.

This sequence belongs to the TMEM14 family. As to quaternary structure, interacts with IQGAP1; this interaction promotes phosphorylation and nuclear translocation of IQGAP1. As to expression, mainly expressed in the outer subventricular zone (OSVZ) of the fetal brains.

It is found in the membrane. Primate-specific protein involved in cortical expansion and folding in the developing neocortex. May drive neural progenitor proliferation through nuclear translocation of IQGAP1, which in turn promotes G1/S cell cycle transitions. This chain is Transmembrane protein 14B (TMEM14B), found in Homo sapiens (Human).